Reading from the N-terminus, the 431-residue chain is MANSC domain-containing protein 1 (431 aa).

The signal sequence occupies residues 1–26 (MFFGGKGSLTYTLVIICFLTLRLAAS). The Extracellular portion of the chain corresponds to 27–385 (QNCLNKSLED…QYGLPFEKWL (359 aa)). Asparagine 31 carries N-linked (GlcNAc...) asparagine glycosylation. One can recognise an MANSC domain in the interval 33–117 (SLEDVVIDIQ…LKPAKGLRSY (85 aa)). Asparagine 222 and asparagine 251 each carry an N-linked (GlcNAc...) asparagine glycan. The tract at residues 236–279 (HTTSATPKPAIRLPTNASVTPSGTSQPQLATTSPPVTTVTSQPP) is disordered. Polar residues predominate over residues 250-265 (TNASVTPSGTSQPQLA). The segment covering 266–279 (TTSPPVTTVTSQPP) has biased composition (low complexity). Asparagine 327 and asparagine 352 each carry an N-linked (GlcNAc...) asparagine glycan. The tract at residues 352-372 (NKTASWEGREASPGRSSQGNV) is disordered. Residues 386-408 (LIGSLLFGVLFLVIGLVLLGRIL) traverse the membrane as a helical segment. Topologically, residues 409-431 (SESLRRKRYSRLDYLINGIYVDI) are cytoplasmic.

It is found in the membrane. The chain is MANSC domain-containing protein 1 (MANSC1) from Macaca fascicularis (Crab-eating macaque).